The sequence spans 242 residues: Phosphoribosylaminoimidazole-succinocarboxamide synthase (242 aa).

Belongs to the SAICAR synthetase family.

The catalysed reaction is 5-amino-1-(5-phospho-D-ribosyl)imidazole-4-carboxylate + L-aspartate + ATP = (2S)-2-[5-amino-1-(5-phospho-beta-D-ribosyl)imidazole-4-carboxamido]succinate + ADP + phosphate + 2 H(+). It functions in the pathway purine metabolism; IMP biosynthesis via de novo pathway; 5-amino-1-(5-phospho-D-ribosyl)imidazole-4-carboxamide from 5-amino-1-(5-phospho-D-ribosyl)imidazole-4-carboxylate: step 1/2. This is Phosphoribosylaminoimidazole-succinocarboxamide synthase from Cyanothece sp. (strain PCC 7425 / ATCC 29141).